The following is a 161-amino-acid chain: Nascent polypeptide-associated complex subunit beta (161 aa).

2 disordered regions span residues 14-41 (LSAN…KDDS) and 125-161 (QNAQ…ADVE). One can recognise an NAC-A/B domain in the interval 37 to 102 (NKDDSKLQAQ…PQEKSLQDLF (66 aa)). The segment covering 125 to 134 (QNAQAAAPAT) has biased composition (low complexity). Residues 135–146 (EGHEAGEKKDND) show a composition bias toward basic and acidic residues.

It belongs to the NAC-beta family. As to quaternary structure, part of the nascent polypeptide-associated complex (NAC), consisting of EGD2 and EGD1. NAC associates with ribosomes via EGD1.

The protein localises to the cytoplasm. The protein resides in the nucleus. In terms of biological role, component of the nascent polypeptide-associated complex (NAC), a dynamic component of the ribosomal exit tunnel, protecting the emerging polypeptides from interaction with other cytoplasmic proteins to ensure appropriate nascent protein targeting. The NAC complex also promotes mitochondrial protein import by enhancing productive ribosome interactions with the outer mitochondrial membrane and blocks the inappropriate interaction of ribosomes translating non-secretory nascent polypeptides with translocation sites in the membrane of the endoplasmic reticulum. EGD1 may act as a transcription factor that exert a negative effect on the expression of several genes that are transcribed by RNA polymerase II. This Eremothecium gossypii (strain ATCC 10895 / CBS 109.51 / FGSC 9923 / NRRL Y-1056) (Yeast) protein is Nascent polypeptide-associated complex subunit beta (EGD1).